The primary structure comprises 181 residues: Inner membrane-spanning protein YciB (181 aa).

Transmembrane regions (helical) follow at residues 24-44, 49-69, 81-101, 119-139, and 149-169; these read SATA…WLRH, NMLW…LILQ, LYWL…KNLI, LNIS…YVAY, and FKLF…ALLL.

Belongs to the YciB family.

It is found in the cell inner membrane. In terms of biological role, plays a role in cell envelope biogenesis, maintenance of cell envelope integrity and membrane homeostasis. In Nitrosomonas eutropha (strain DSM 101675 / C91 / Nm57), this protein is Inner membrane-spanning protein YciB.